A 262-amino-acid chain; its full sequence is Phosphonates import ATP-binding protein PhnC (262 aa).

The region spanning 5 to 253 is the ABC transporter domain; that stretch reads IRVEKLAKTF…RFDHLYRSIN (249 aa). Residue 37 to 44 coordinates ATP; it reads GPSGSGKS.

Belongs to the ABC transporter superfamily. Phosphonates importer (TC 3.A.1.9.1) family. As to quaternary structure, the complex is composed of two ATP-binding proteins (PhnC), two transmembrane proteins (PhnE) and a solute-binding protein (PhnD).

The protein localises to the cell inner membrane. It catalyses the reaction phosphonate(out) + ATP + H2O = phosphonate(in) + ADP + phosphate + H(+). Its function is as follows. Part of the ABC transporter complex PhnCDE involved in phosphonates import. Responsible for energy coupling to the transport system. This Shigella flexneri serotype 5b (strain 8401) protein is Phosphonates import ATP-binding protein PhnC.